The following is a 506-amino-acid chain: MAP kinase kinase MKK2/SSP33 (506 aa).

Residues 1 to 69 (MASMFRPPES…TSTTSSMASN (69 aa)) form a disordered region. The span at 26 to 52 (LVQNAKSTNDGQHLNRSPYSSVNESPY) shows a compositional bias: polar residues. Positions 53–69 (SNNSTSATSTTSSMASN) are enriched in low complexity. Residues 214 to 481 (ITTLGILGEG…PRQMLKHPWI (268 aa)) enclose the Protein kinase domain. ATP contacts are provided by residues 220–228 (LGEGAGGSV) and lysine 243. Catalysis depends on aspartate 342, which acts as the Proton acceptor.

This sequence belongs to the protein kinase superfamily. STE Ser/Thr protein kinase family. MAP kinase kinase subfamily.

The catalysed reaction is L-seryl-[protein] + ATP = O-phospho-L-seryl-[protein] + ADP + H(+). The enzyme catalyses L-threonyl-[protein] + ATP = O-phospho-L-threonyl-[protein] + ADP + H(+). It catalyses the reaction L-tyrosyl-[protein] + ATP = O-phospho-L-tyrosyl-[protein] + ADP + H(+). Serine/threonine protein kinase involved in a signal transduction pathway that plays a role in yeast cell morphogenesis and cell growth. This pathway seems to start by SMP3; then involves the kinase PKC1 that may act on the BCK1 kinase that then phosphorylates MKK1 and MKK2 which themselves phosphorylate the MPK1 kinase. The polypeptide is MAP kinase kinase MKK2/SSP33 (MKK2) (Saccharomyces cerevisiae (strain ATCC 204508 / S288c) (Baker's yeast)).